The following is a 425-amino-acid chain: Nuclear hormone receptor family member nhr-13 (425 aa).

Positions 5–83 (PNSCEVCSSS…IGMKPLLVKS (79 aa)) form a DNA-binding region, nuclear receptor. NR C4-type zinc fingers lie at residues 11–30 (CSSS…CKAC) and 46–71 (CIDQ…LKKC). Residues 108–148 (VKENSEEIQNDDDPQESDAEMENESTPGPSSEPSENVSAEN) form a disordered region. A compositionally biased stretch (acidic residues) spans 113-130 (EEIQNDDDPQESDAEMEN). Residues 131–142 (ESTPGPSSEPSE) are compositionally biased toward low complexity. The NR LBD domain occupies 147 to 414 (ENQETVTKFL…KSMISLTSFW (268 aa)).

The protein belongs to the nuclear hormone receptor family. In terms of assembly, may interact with nuclear hormone receptor nhr-49.

The protein resides in the nucleus. Its function is as follows. Orphan nuclear receptor. Involved in regulating fatty acid desaturase genes, acting in concert with nuclear hormone receptor nhr-49. The sequence is that of Nuclear hormone receptor family member nhr-13 (nhr-13) from Caenorhabditis elegans.